The sequence spans 130 residues: Ribosome-binding factor A (130 aa).

It belongs to the RbfA family. Monomer. Binds 30S ribosomal subunits, but not 50S ribosomal subunits or 70S ribosomes.

It localises to the cytoplasm. Functionally, one of several proteins that assist in the late maturation steps of the functional core of the 30S ribosomal subunit. Associates with free 30S ribosomal subunits (but not with 30S subunits that are part of 70S ribosomes or polysomes). Required for efficient processing of 16S rRNA. May interact with the 5'-terminal helix region of 16S rRNA. In Roseiflexus sp. (strain RS-1), this protein is Ribosome-binding factor A.